The following is a 134-amino-acid chain: Probable glycine cleavage system H protein (134 aa).

One can recognise a Lipoyl-binding domain in the interval 29–110 (TVLVGISDYA…PYENWIAKLK (82 aa)). An N6-lipoyllysine modification is found at lysine 70.

Belongs to the GcvH family. In terms of assembly, the glycine cleavage system is composed of four proteins: P, T, L and H. It depends on (R)-lipoate as a cofactor.

Functionally, the glycine cleavage system catalyzes the degradation of glycine. The H protein shuttles the methylamine group of glycine from the P protein to the T protein. This Thermococcus kodakarensis (strain ATCC BAA-918 / JCM 12380 / KOD1) (Pyrococcus kodakaraensis (strain KOD1)) protein is Probable glycine cleavage system H protein.